The chain runs to 129 residues: Lysozyme C-1 (129 aa).

The C-type lysozyme domain occupies 1–129; sequence KVFERCELAR…VSSYVEGCTL (129 aa). Cystine bridges form between cysteine 6–cysteine 127, cysteine 30–cysteine 115, cysteine 65–cysteine 81, and cysteine 77–cysteine 95. Residues glutamate 35 and aspartate 53 contribute to the active site.

This sequence belongs to the glycosyl hydrolase 22 family. In terms of assembly, monomer.

It catalyses the reaction Hydrolysis of (1-&gt;4)-beta-linkages between N-acetylmuramic acid and N-acetyl-D-glucosamine residues in a peptidoglycan and between N-acetyl-D-glucosamine residues in chitodextrins.. In terms of biological role, lysozymes have primarily a bacteriolytic function; those in tissues and body fluids are associated with the monocyte-macrophage system and enhance the activity of immunoagents. In Capra hircus (Goat), this protein is Lysozyme C-1.